The following is a 376-amino-acid chain: MITAVNRPAALHINLAAIKENTRQAKAHLKPGQKLFCVVKANAYGHGAARLAPVMEEAGADGFCVAMLDEGLELRRAQIVKPILVLGLQPAEEAALAAANDISLPVSSLDWLKKAEKVLRKEGLQLKIHLAIDSGMGRIGFSEDEDFKAVNEYLQGNDAFFVEGMFTHFASADSADASYFDYQVKRFKHMESLLTVKPKWIHVDNTAAILFDKDVASDIVRFGIGLYGLNPSSAPGSRDLEPAFALKPAMSFVSELTYVKQIHKGYGVGYGSTHIAEEDEWIGTVPVGYADGWIRKFQGFKVKVGDTYCPIVGRVCMDQFMVLLPKEVPAGTPVELISADPAAPNSLRRAADWLDTIHYEVACQFNDRLDRIYDNE.

The active-site Proton acceptor; specific for D-alanine is K40. Position 40 is an N6-(pyridoxal phosphate)lysine (K40). A substrate-binding site is contributed by R138. Catalysis depends on Y270, which acts as the Proton acceptor; specific for L-alanine. M317 contributes to the substrate binding site.

The protein belongs to the alanine racemase family. It depends on pyridoxal 5'-phosphate as a cofactor.

The catalysed reaction is L-alanine = D-alanine. It functions in the pathway amino-acid biosynthesis; D-alanine biosynthesis; D-alanine from L-alanine: step 1/1. Its function is as follows. Catalyzes the interconversion of L-alanine and D-alanine. May also act on other amino acids. The protein is Alanine racemase (alr) of Lactobacillus delbrueckii subsp. bulgaricus (strain ATCC 11842 / DSM 20081 / BCRC 10696 / JCM 1002 / NBRC 13953 / NCIMB 11778 / NCTC 12712 / WDCM 00102 / Lb 14).